The following is a 285-amino-acid chain: Retron Ec67 DNA adenine methylase (285 aa).

S-adenosyl-L-methionine contacts are provided by W7, K11, D51, and D179.

It belongs to the N(4)/N(6)-methyltransferase family.

It carries out the reaction a 2'-deoxyadenosine in DNA + S-adenosyl-L-methionine = an N(6)-methyl-2'-deoxyadenosine in DNA + S-adenosyl-L-homocysteine + H(+). Functionally, an alpha subtype methylase that recognizes the double-stranded sequence 5'-GATC-3' and methylates A-2 on both strands. May play a regulatory role in the functions of the retron. The polypeptide is Retron Ec67 DNA adenine methylase (Escherichia coli).